Here is a 343-residue protein sequence, read N- to C-terminus: NADH-quinone oxidoreductase subunit H (343 aa).

Transmembrane regions (helical) follow at residues 21-41 (WTLV…LFCV), 95-115 (FILA…VVPF), 124-144 (VNVG…GVLL), 172-192 (MGFT…GDIV), 197-217 (GLWY…SVVA), 257-277 (IIMV…PPIE), 281-301 (FIPG…FFLW), and 317-337 (LGWK…GLAM).

This sequence belongs to the complex I subunit 1 family. As to quaternary structure, NDH-1 is composed of 14 different subunits. Subunits NuoA, H, J, K, L, M, N constitute the membrane sector of the complex.

It is found in the cell inner membrane. The enzyme catalyses a quinone + NADH + 5 H(+)(in) = a quinol + NAD(+) + 4 H(+)(out). Functionally, NDH-1 shuttles electrons from NADH, via FMN and iron-sulfur (Fe-S) centers, to quinones in the respiratory chain. The immediate electron acceptor for the enzyme in this species is believed to be ubiquinone. Couples the redox reaction to proton translocation (for every two electrons transferred, four hydrogen ions are translocated across the cytoplasmic membrane), and thus conserves the redox energy in a proton gradient. This subunit may bind ubiquinone. The chain is NADH-quinone oxidoreductase subunit H from Magnetococcus marinus (strain ATCC BAA-1437 / JCM 17883 / MC-1).